A 260-amino-acid chain; its full sequence is Phosphate import ATP-binding protein PstB (260 aa).

Positions 14 to 255 (LQIRNLDFFY…PGKKQTEDYI (242 aa)) constitute an ABC transporter domain. 46–53 (GPSGCGKS) serves as a coordination point for ATP.

The protein belongs to the ABC transporter superfamily. Phosphate importer (TC 3.A.1.7) family. The complex is composed of two ATP-binding proteins (PstB), two transmembrane proteins (PstC and PstA) and a solute-binding protein (PstS).

The protein resides in the cell inner membrane. The enzyme catalyses phosphate(out) + ATP + H2O = ADP + 2 phosphate(in) + H(+). Part of the ABC transporter complex PstSACB involved in phosphate import. Responsible for energy coupling to the transport system. This chain is Phosphate import ATP-binding protein PstB, found in Thiobacillus denitrificans (strain ATCC 25259 / T1).